The sequence spans 56 residues: Large ribosomal subunit protein bL33 (56 aa).

It belongs to the bacterial ribosomal protein bL33 family.

The sequence is that of Large ribosomal subunit protein bL33 from Glaesserella parasuis serovar 5 (strain SH0165) (Haemophilus parasuis).